An 87-amino-acid polypeptide reads, in one-letter code: Small ribosomal subunit protein bS21m (87 aa).

The protein belongs to the bacterial ribosomal protein bS21 family. In terms of assembly, component of the mitochondrial ribosome small subunit (28S) which comprises a 12S rRNA and about 30 distinct proteins.

The protein resides in the mitochondrion. The chain is Small ribosomal subunit protein bS21m (Mrps21) from Mus musculus (Mouse).